The primary structure comprises 220 residues: Imidazoleglycerol-phosphate dehydratase (220 aa).

Belongs to the imidazoleglycerol-phosphate dehydratase family.

The catalysed reaction is D-erythro-1-(imidazol-4-yl)glycerol 3-phosphate = 3-(imidazol-4-yl)-2-oxopropyl phosphate + H2O. The protein operates within amino-acid biosynthesis; L-histidine biosynthesis; L-histidine from 5-phospho-alpha-D-ribose 1-diphosphate: step 6/9. The chain is Imidazoleglycerol-phosphate dehydratase (HIS3) from Eremothecium gossypii (strain ATCC 10895 / CBS 109.51 / FGSC 9923 / NRRL Y-1056) (Yeast).